The primary structure comprises 590 residues: Aspartate--tRNA(Asp/Asn) ligase (590 aa).

Glu176 contacts L-aspartate. The tract at residues 200-203 (QLFK) is aspartate. 2 residues coordinate L-aspartate: Arg222 and His451. An ATP-binding site is contributed by 222–224 (RDE). Glu485 contributes to the ATP binding site. An L-aspartate-binding site is contributed by Arg492. Residue 537-540 (GIDR) participates in ATP binding.

This sequence belongs to the class-II aminoacyl-tRNA synthetase family. Type 1 subfamily. Homodimer.

The protein resides in the cytoplasm. The enzyme catalyses tRNA(Asx) + L-aspartate + ATP = L-aspartyl-tRNA(Asx) + AMP + diphosphate. In terms of biological role, aspartyl-tRNA synthetase with relaxed tRNA specificity since it is able to aspartylate not only its cognate tRNA(Asp) but also tRNA(Asn). Reaction proceeds in two steps: L-aspartate is first activated by ATP to form Asp-AMP and then transferred to the acceptor end of tRNA(Asp/Asn). The chain is Aspartate--tRNA(Asp/Asn) ligase from Ehrlichia ruminantium (strain Gardel).